The primary structure comprises 151 residues: Deoxyuridine 5'-triphosphate nucleotidohydrolase (151 aa).

Substrate is bound by residues 70–72 (RSG), N83, 87–89 (LID), and M97.

It belongs to the dUTPase family. Mg(2+) serves as cofactor.

The enzyme catalyses dUTP + H2O = dUMP + diphosphate + H(+). It participates in pyrimidine metabolism; dUMP biosynthesis; dUMP from dCTP (dUTP route): step 2/2. In terms of biological role, this enzyme is involved in nucleotide metabolism: it produces dUMP, the immediate precursor of thymidine nucleotides and it decreases the intracellular concentration of dUTP so that uracil cannot be incorporated into DNA. The sequence is that of Deoxyuridine 5'-triphosphate nucleotidohydrolase from Ectopseudomonas mendocina (strain ymp) (Pseudomonas mendocina).